We begin with the raw amino-acid sequence, 149 residues long: MFCPFCSEQETKVIDSRLVAEGQQVRRRRECMVCHERFTTFESAELVMPRVIKRDGSREPFNEDKLRAGLQRALEKRPVSTEKVEQCILSLKSQLRATGEREVSSELLGNLIMKALKELDKVAYVRFASVYRSFEDIREFGEEIARLGD.

A zinc finger lies at 3-34 (CPFCSEQETKVIDSRLVAEGQQVRRRRECMVC). Positions 49 to 139 (PRVIKRDGSR…VYRSFEDIRE (91 aa)) constitute an ATP-cone domain.

This sequence belongs to the NrdR family. Requires Zn(2+) as cofactor.

Its function is as follows. Negatively regulates transcription of bacterial ribonucleotide reductase nrd genes and operons by binding to NrdR-boxes. In Alteromonas mediterranea (strain DSM 17117 / CIP 110805 / LMG 28347 / Deep ecotype), this protein is Transcriptional repressor NrdR.